A 101-amino-acid polypeptide reads, in one-letter code: MPKRKVSSAEGAAKEEPKRRSARLSAKPAPAKVETKPKKAAGKDKSSDKKVQTKGKRGAKGKQAEVANQETKEDLPAENGETKNEESPASDEAEEKEAKSD.

Residues 1-101 (MPKRKVSSAE…EAEEKEAKSD (101 aa)) are disordered. Residue Ser7 is modified to ADP-ribosylserine. Residue Ser8 is modified to Phosphoserine. Lys14 carries the post-translational modification N6-acetyllysine. The residue at position 21 (Ser21) is a Phosphoserine. At Ser25 the chain carries ADP-ribosylserine; alternate. Ser25 is modified (phosphoserine; alternate). Lys27 is modified (N6-acetyllysine). Composition is skewed to basic and acidic residues over residues 33-51 (VETK…DKKV) and 70-86 (ETKE…KNEE). Thr82 carries the phosphothreonine modification. An N6-acetyllysine modification is found at Lys83. Phosphoserine occurs at positions 87, 90, and 100.

The protein belongs to the HMGN family. Interacts with transcriptional regulator SEHBP. In terms of processing, phosphorylation on Ser-21 and Ser-25 weakens binding to nucleosomes and increases the rate of H3 phosphorylation.

The protein localises to the nucleus. Binds to the inner side of the nucleosomal DNA thus altering the interaction between the DNA and the histone octamer. May be involved in the process which maintains transcribable genes in a unique chromatin conformation. Inhibits the phosphorylation of nucleosomal histones H3 and H2A by RPS6KA5/MSK1 and RPS6KA3/RSK2. This chain is Non-histone chromosomal protein HMG-14 (HMGN1), found in Bos taurus (Bovine).